The sequence spans 163 residues: Thiol peroxidase (163 aa).

The region spanning 16–162 (LQVGDTAHDF…YDAAIAAVKS (147 aa)) is the Thioredoxin domain. Cys58 serves as the catalytic Cysteine sulfenic acid (-SOH) intermediate. A disulfide bond links Cys58 and Cys92.

The protein belongs to the peroxiredoxin family. Tpx subfamily. In terms of assembly, homodimer.

The enzyme catalyses a hydroperoxide + [thioredoxin]-dithiol = an alcohol + [thioredoxin]-disulfide + H2O. Thiol-specific peroxidase that catalyzes the reduction of hydrogen peroxide and organic hydroperoxides to water and alcohols, respectively. Plays a role in cell protection against oxidative stress by detoxifying peroxides. The chain is Thiol peroxidase from Streptococcus sanguinis.